Here is a 368-residue protein sequence, read N- to C-terminus: 3-dehydroquinate synthase (368 aa).

Residues 76-81 (DGEQYK), 110-114 (GVIGD), 134-135 (TT), K147, K156, and 174-177 (CLKT) contribute to the NAD(+) site. Residues E189, H252, and H269 each coordinate Zn(2+).

The protein belongs to the sugar phosphate cyclases superfamily. Dehydroquinate synthase family. The cofactor is NAD(+). It depends on Co(2+) as a cofactor. Zn(2+) serves as cofactor.

Its subcellular location is the cytoplasm. It catalyses the reaction 7-phospho-2-dehydro-3-deoxy-D-arabino-heptonate = 3-dehydroquinate + phosphate. It participates in metabolic intermediate biosynthesis; chorismate biosynthesis; chorismate from D-erythrose 4-phosphate and phosphoenolpyruvate: step 2/7. Catalyzes the conversion of 3-deoxy-D-arabino-heptulosonate 7-phosphate (DAHP) to dehydroquinate (DHQ). The polypeptide is 3-dehydroquinate synthase (Vibrio vulnificus (strain YJ016)).